Consider the following 221-residue polypeptide: Cutinase 3 (221 aa).

The signal sequence occupies residues 1–17; it reads MRFHTILLAALASLVIA. 2 cysteine pairs are disulfide-bonded: Cys44–Cys122 and Cys70–Cys84. Ser133 functions as the Nucleophile in the catalytic mechanism. Cys184 and Cys191 are oxidised to a cystine. Asp188 is an active-site residue. His201 acts as the Proton donor/acceptor in catalysis.

The protein belongs to the cutinase family.

It localises to the secreted. The catalysed reaction is cutin + H2O = cutin monomers.. Functionally, catalyzes the hydrolysis of complex carboxylic polyesters found in the cell wall of plants. Degrades cutin, a macromolecule that forms the structure of the plant cuticle. Also degrades suberin, a specialized macromolecule found in the cell wall of various plant tissues. This chain is Cutinase 3, found in Emericella nidulans (strain FGSC A4 / ATCC 38163 / CBS 112.46 / NRRL 194 / M139) (Aspergillus nidulans).